The sequence spans 90 residues: Conotoxin Mr22.1 (90 aa).

An N-terminal signal peptide occupies residues 1-18 (MMTRVFFAMFFLMALTEG). Positions 19–49 (WPRLYDSDCVRGRNMHITCFKDQTCGLTVKR) are excised as a propeptide. Trp75 carries the 6'-bromotryptophan modification.

Belongs to the E superfamily. Contains 4 disulfide bonds. As to expression, expressed by the venom duct.

It is found in the secreted. The sequence is that of Conotoxin Mr22.1 from Conus marmoreus (Marble cone).